The sequence spans 448 residues: Histidine--tRNA ligase (448 aa).

It belongs to the class-II aminoacyl-tRNA synthetase family. Homodimer.

The protein localises to the cytoplasm. The enzyme catalyses tRNA(His) + L-histidine + ATP = L-histidyl-tRNA(His) + AMP + diphosphate + H(+). This is Histidine--tRNA ligase from Treponema denticola (strain ATCC 35405 / DSM 14222 / CIP 103919 / JCM 8153 / KCTC 15104).